The primary structure comprises 270 residues: 4-hydroxy-tetrahydrodipicolinate reductase (270 aa).

NAD(+) is bound by residues 11–16 (GAGGRM) and Glu-37. Arg-38 provides a ligand contact to NADP(+). NAD(+) is bound by residues 101 to 103 (GTT) and 125 to 128 (APNM). The active-site Proton donor/acceptor is the His-158. His-159 serves as a coordination point for (S)-2,3,4,5-tetrahydrodipicolinate. Catalysis depends on Lys-162, which acts as the Proton donor. 168 to 169 (GT) is a (S)-2,3,4,5-tetrahydrodipicolinate binding site.

It belongs to the DapB family.

It is found in the cytoplasm. The enzyme catalyses (S)-2,3,4,5-tetrahydrodipicolinate + NAD(+) + H2O = (2S,4S)-4-hydroxy-2,3,4,5-tetrahydrodipicolinate + NADH + H(+). It catalyses the reaction (S)-2,3,4,5-tetrahydrodipicolinate + NADP(+) + H2O = (2S,4S)-4-hydroxy-2,3,4,5-tetrahydrodipicolinate + NADPH + H(+). It participates in amino-acid biosynthesis; L-lysine biosynthesis via DAP pathway; (S)-tetrahydrodipicolinate from L-aspartate: step 4/4. Its function is as follows. Catalyzes the conversion of 4-hydroxy-tetrahydrodipicolinate (HTPA) to tetrahydrodipicolinate. This Shewanella sp. (strain ANA-3) protein is 4-hydroxy-tetrahydrodipicolinate reductase.